The following is a 545-amino-acid chain: Cryptochrome-1 (545 aa).

In terms of domain architecture, Photolyase/cryptochrome alpha/beta spans 3-138 (VNNILWFRHG…KCVEKVSHTL (136 aa)). FAD-binding positions include arginine 236, serine 264, serine 266, glutamine 307, histidine 374, 406–408 (DAD), cysteine 412, and asparagine 415.

The protein belongs to the DNA photolyase class-1 family. As to quaternary structure, interacts with tim and per; promoted by light conditions. The cofactor is FAD.

The protein localises to the cytoplasm. It localises to the perinuclear region. It is found in the nucleus. Its function is as follows. Blue light-dependent regulator that is the input of the circadian feedback loop. Has no photolyase activity for cyclobutane pyrimidine dimers or 6-4 photoproducts. Regulation of expression by light suggests a role in photoreception for locomotor activity rhythms. Functions, together with per, as a transcriptional repressor required for the oscillation of peripheral circadian clocks and for the correct specification of clock cells. Genes directly activated by the transcription factors Clock (Clk) and cycle (cyc) are repressed by cry. This Aedes aegypti (Yellowfever mosquito) protein is Cryptochrome-1.